Consider the following 74-residue polypeptide: Conotoxin AbVIL (74 aa).

Positions 1–17 (VLIIAVLFLTACQLTTA) are cleaved as a signal peptide. The disordered stretch occupies residues 17 to 41 (AETSSRGEQKHRAPRSTDKNSRMTK). A propeptide spanning residues 18-40 (ETSSRGEQKHRAPRSTDKNSRMT) is cleaved from the precursor. Residues 21 to 37 (SRGEQKHRAPRSTDKNS) show a composition bias toward basic and acidic residues. Cystine bridges form between Cys43-Cys57, Cys50-Cys61, and Cys56-Cys68.

This sequence belongs to the conotoxin O1 superfamily. As to expression, expressed by the venom duct.

Its subcellular location is the secreted. The sequence is that of Conotoxin AbVIL from Conus abbreviatus (Abbreviated cone).